The chain runs to 75 residues: MLIPHHLLEAETLTRLIEDFVTREGTDNGEETPLESRVLRVRQALERGEALILFEPDSQQCQLVAKRDVPKEWLD.

The protein belongs to the UPF0270 family.

This Azotobacter vinelandii (strain DJ / ATCC BAA-1303) protein is UPF0270 protein Avin_35000.